The primary structure comprises 917 residues: Hexokinase HKDC1 (917 aa).

The interval 1-20 (MFAVHLMAFYFSKLKEDQIK) is mitochondrial-binding peptide (MBP). Hexokinase domains follow at residues 16–458 (EDQI…MVTA) and 464–905 (QAQR…LITA). Residues R30 and 84-89 (DLGGSK) each bind ATP. A hexokinase small subdomain 1 region spans residues 73-207 (DGSENGEFLS…DMDVDILALV (135 aa)). Position 84–91 (84–91 (DLGGSKFR)) interacts with D-glucose 6-phosphate. D-glucose contacts are provided by residues S155, 172-173 (TK), and 208-209 (ND). The hexokinase large subdomain 1 stretch occupies residues 208-447 (NDTVGTMMTC…CDVRFLLSES (240 aa)). Residues D209 and T232 each coordinate D-glucose 6-phosphate. D-glucose contacts are provided by residues N235, E260, and 291 to 294 (QLFE). Residue 413-415 (DGT) coordinates D-glucose 6-phosphate. An ATP-binding site is contributed by 425–426 (KR). D-glucose 6-phosphate contacts are provided by residues S449 and 532–536 (DLGGT). A hexokinase small subdomain 2 region spans residues 521–654 (DGTEKGKFLA…EFDLDIVAVV (134 aa)). 532-537 (DLGGTN) contacts ATP. D-glucose-binding positions include 602 to 603 (SF), 619 to 620 (TK), and 655 to 656 (ND). The segment at 655-894 (NDTVGTMMTC…CDVTFMLSED (240 aa)) is hexokinase large subdomain 2. D-glucose 6-phosphate is bound by residues D656 and T679. T679 is a binding site for ATP. Residues 681–682 (SN), E707, and E741 contribute to the D-glucose site. Residues 746–747 (GM), 783–787 (TKFLS), and 862–866 (TLYKL) each bind ATP. D-glucose 6-phosphate contacts are provided by residues 860–862 (DGT) and S896.

This sequence belongs to the hexokinase family. As to expression, widely expressed. Highly expressed in the brush border, surface epithelium and the myenteric plexus of the small and large intestines; the acinar centrocytes and interlobular ducts of the pancreas; and the alveolar macrophages in the lungs (at protein level). Present at moderate level in the thyroid follicular epithelium (at protein level).

Its subcellular location is the cytoplasm. The protein localises to the mitochondrion membrane. The protein resides in the photoreceptor inner segment. It carries out the reaction a D-hexose + ATP = a D-hexose 6-phosphate + ADP + H(+). The enzyme catalyses D-glucose + ATP = D-glucose 6-phosphate + ADP + H(+). It participates in carbohydrate metabolism; hexose metabolism. The protein operates within carbohydrate degradation; glycolysis; D-glyceraldehyde 3-phosphate and glycerone phosphate from D-glucose: step 1/4. Its function is as follows. Catalyzes the phosphorylation of hexose to hexose 6-phosphate, although at very low level compared to other hexokinases. Has low glucose phosphorylating activity compared to other hexokinases. Involved in glucose homeostasis and hepatic lipid accumulation. Required to maintain whole-body glucose homeostasis during pregnancy; however additional evidences are required to confirm this role. The protein is Hexokinase HKDC1 of Homo sapiens (Human).